Consider the following 663-residue polypeptide: Oxytetracycline resistance protein (663 aa).

One can recognise a tr-type G domain in the interval 1–252 (MNKLNLGILA…GIRELLPSVH (252 aa)). GTP is bound by residues 10–17 (AHVDAGKT), 74–78 (DTPGH), and 128–131 (NKID).

It belongs to the TRAFAC class translation factor GTPase superfamily. Classic translation factor GTPase family. TetM/TetO subfamily.

In terms of biological role, abolishes the inhibitory effect of oxytetracycline on protein synthesis by a non-covalent modification of the ribosomes. This is Oxytetracycline resistance protein (otrA) from Streptomyces rimosus.